Reading from the N-terminus, the 202-residue chain is Protein EMBRYO DEFECTIVE 514 (202 aa).

2 disordered regions span residues Met1 to Leu69 and Met168 to Arg202. Ala2 is modified (N-acetylalanine). Composition is skewed to basic and acidic residues over residues Glu33–Glu42 and Gly51–Gly65. Positions Asn174–Arg202 are enriched in gly residues.

In terms of tissue distribution, expressed in leaves, flowers and embryos at globular stage.

The protein resides in the nucleus. In terms of biological role, may play a role in ribosome biogenesis and in determining the rate of cell division. Involved in a process essential for nuclear and nucleolar functions. This chain is Protein EMBRYO DEFECTIVE 514, found in Arabidopsis thaliana (Mouse-ear cress).